Consider the following 316-residue polypeptide: uncharacterized protein (316 aa).

BNR repeat units follow at residues 62–73 (FISDSQGLKFSP), 124–135 (KISVDNGLTWSN), 196–207 (FISRDGGLTWRV), and 242–253 (YFSLDQGRTWNQ).

This is an uncharacterized protein from Saccharomyces cerevisiae (strain ATCC 204508 / S288c) (Baker's yeast).